Consider the following 1244-residue polypeptide: ATP-dependent helicase/nuclease subunit A (1244 aa).

In terms of domain architecture, UvrD-like helicase ATP-binding spans 4-477 (TKWTEEQLSA…IQLYKNFRSR (474 aa)). Position 25–32 (25–32 (AAAGSGKT)) interacts with ATP. Residues 517–811 (KNVDDIIGGP…RIMSIHKSKG (295 aa)) form the UvrD-like helicase C-terminal domain.

Belongs to the helicase family. AddA subfamily. Heterodimer of AddA and AddB/RexB. Requires Mg(2+) as cofactor.

It carries out the reaction Couples ATP hydrolysis with the unwinding of duplex DNA by translocating in the 3'-5' direction.. The catalysed reaction is ATP + H2O = ADP + phosphate + H(+). The heterodimer acts as both an ATP-dependent DNA helicase and an ATP-dependent, dual-direction single-stranded exonuclease. Recognizes the chi site generating a DNA molecule suitable for the initiation of homologous recombination. The AddA nuclease domain is required for chi fragment generation; this subunit has the helicase and 3' -&gt; 5' nuclease activities. This Clostridium botulinum (strain Alaska E43 / Type E3) protein is ATP-dependent helicase/nuclease subunit A.